The sequence spans 380 residues: Kappa-type opioid receptor (380 aa).

The Extracellular segment spans residues 1–57; it reads MESPIQIFRGEPGPTCAPSACLLPNSSSWFPNWAESDSNGSVGSEDQQLEPAHISPA. 2 N-linked (GlcNAc...) asparagine glycosylation sites follow: N25 and N39. The chain crosses the membrane as a helical span at residues 58–85; the sequence is IPVIITAVYSVVFVVGLVGNSLVMFVII. Residues 86-95 lie on the Cytoplasmic side of the membrane; it reads RYTKMKTATN. A helical membrane pass occupies residues 96-119; the sequence is IYIFNLALADALVTTTMPFQSAVY. The Extracellular portion of the chain corresponds to 120 to 132; that stretch reads LMNSWPFGDVLCK. C131 and C210 are disulfide-bonded. Residues 133-154 traverse the membrane as a helical segment; the sequence is IVISIDYYNMFTSIFTLTMMSV. Residues 155–173 are Cytoplasmic-facing; sequence DRYIAVCHPVKALDFRTPL. The helical transmembrane segment at 174 to 196 threads the bilayer; it reads KAKIINICIWLLASSVGISAIVL. Topologically, residues 197–222 are extracellular; sequence GGTKVREDVDVIECSLQFPDDEYSWW. The helical transmembrane segment at 223–247 threads the bilayer; the sequence is DLFMKICVFVFAFVIPVLIIIVCYT. At 248 to 274 the chain is on the cytoplasmic side; it reads LMILRLKSVRLLSGSREKDRNLRRITK. Residues 275-296 form a helical membrane-spanning segment; that stretch reads LVLVVVAVFIICWTPIHIFILV. At 297–311 the chain is on the extracellular side; it reads EALGSTSHSTAVLSS. Residues 312 to 333 traverse the membrane as a helical segment; that stretch reads YYFCIALGYTNSSLNPVLYAFL. The Cytoplasmic segment spans residues 334–380; the sequence is DENFKRCFRDFCFPIKMRMERQSTNRVRNTVQDPASMRDVGGMNKPV. A lipid anchor (S-palmitoyl cysteine) is attached at C345.

It belongs to the G-protein coupled receptor 1 family. In terms of assembly, interacts with NHERF1. Interacts with GABARAPL1.

Its subcellular location is the cell membrane. G-protein coupled opioid receptor that functions as a receptor for endogenous alpha-neoendorphins and dynorphins, but has low affinity for beta-endorphins. Also functions as a receptor for various synthetic opioids and for the psychoactive diterpene salvinorin A. Ligand binding causes a conformation change that triggers signaling via guanine nucleotide-binding proteins (G proteins) and modulates the activity of down-stream effectors, such as adenylate cyclase. Signaling leads to the inhibition of adenylate cyclase activity. Inhibits neurotransmitter release by reducing calcium ion currents and increasing potassium ion conductance. Plays a role in the perception of pain. Plays a role in mediating reduced physical activity upon treatment with synthetic opioids. Plays a role in the regulation of salivation in response to synthetic opioids. May play a role in arousal and regulation of autonomic and neuroendocrine functions. The sequence is that of Kappa-type opioid receptor (Oprk1) from Rattus norvegicus (Rat).